The primary structure comprises 515 residues: Serine--tRNA ligase, cytoplasmic (515 aa).

The tract at residues 9-61 (RTDKGGDPEIIRETQRKRFKDVSLVDKLVQADTEWRKCRFTADNLNKAKNLCS) is interaction with tRNA. Residues Thr-271 and Arg-302 each contribute to the L-serine site. Residues 302–304 (RQE) and 318–321 (VHQF) contribute to the ATP site. Residue Glu-325 coordinates L-serine. 391–394 (ELVS) is a binding site for ATP. Asn-427 is a binding site for L-serine. Residues 475–515 (PIDQETTKKQKKQQEGGKKKKHQGGDADLENKVENMSVNDS) are disordered. The span at 479–507 (ETTKKQKKQQEGGKKKKHQGGDADLENKV) shows a compositional bias: basic and acidic residues. The Nuclear localization signal motif lies at 482–494 (KKQKKQQEGGKKK).

It belongs to the class-II aminoacyl-tRNA synthetase family. Type-1 seryl-tRNA synthetase subfamily.

The protein resides in the cytoplasm. It localises to the nucleus. The catalysed reaction is tRNA(Ser) + L-serine + ATP = L-seryl-tRNA(Ser) + AMP + diphosphate + H(+). It carries out the reaction tRNA(Sec) + L-serine + ATP = L-seryl-tRNA(Sec) + AMP + diphosphate + H(+). Its function is as follows. Catalyzes the attachment of serine to tRNA(Ser) in a two-step reaction: serine is first activated by ATP to form Ser-AMP and then transferred to the acceptor end of tRNA(Ser). Is probably also able to aminoacylate tRNA(Sec) with serine, to form the misacylated tRNA L-seryl-tRNA(Sec), which will be further converted into selenocysteinyl-tRNA(Sec). In the nucleus, binds to the vegfa core promoter and prevents myc binding and transcriptional activation by myc. Thereby inhibits the production of vegfa and sprouting angiogenesis mediated by vegfa. The protein is Serine--tRNA ligase, cytoplasmic (sars1) of Danio rerio (Zebrafish).